Consider the following 84-residue polypeptide: Small ribosomal subunit protein bS18 (84 aa).

It belongs to the bacterial ribosomal protein bS18 family. In terms of assembly, part of the 30S ribosomal subunit. Forms a tight heterodimer with protein bS6.

Binds as a heterodimer with protein bS6 to the central domain of the 16S rRNA, where it helps stabilize the platform of the 30S subunit. This chain is Small ribosomal subunit protein bS18, found in Polynucleobacter necessarius subsp. necessarius (strain STIR1).